A 425-amino-acid chain; its full sequence is UDP-N-acetylglucosamine 1-carboxyvinyltransferase (425 aa).

Residue 22–23 participates in phosphoenolpyruvate binding; the sequence is KN. Arg91 contacts UDP-N-acetyl-alpha-D-glucosamine. Cys115 (proton donor) is an active-site residue. Residue Cys115 is modified to 2-(S-cysteinyl)pyruvic acid O-phosphothioketal. Residues 120-124, Asp305, and Val327 each bind UDP-N-acetyl-alpha-D-glucosamine; that span reads RPIDL.

Belongs to the EPSP synthase family. MurA subfamily.

The protein localises to the cytoplasm. The enzyme catalyses phosphoenolpyruvate + UDP-N-acetyl-alpha-D-glucosamine = UDP-N-acetyl-3-O-(1-carboxyvinyl)-alpha-D-glucosamine + phosphate. It participates in cell wall biogenesis; peptidoglycan biosynthesis. In terms of biological role, cell wall formation. Adds enolpyruvyl to UDP-N-acetylglucosamine. The polypeptide is UDP-N-acetylglucosamine 1-carboxyvinyltransferase (Coprothermobacter proteolyticus (strain ATCC 35245 / DSM 5265 / OCM 4 / BT)).